Consider the following 365-residue polypeptide: Fructose-1,6-bisphosphatase class 1 2 (365 aa).

4 residues coordinate Mg(2+): Glu-100, Asp-122, Leu-124, and Asp-125. Substrate is bound by residues 125–128 (DGSS) and Asn-221. Glu-293 provides a ligand contact to Mg(2+).

The protein belongs to the FBPase class 1 family. Homotetramer. The cofactor is Mg(2+).

It is found in the cytoplasm. The catalysed reaction is beta-D-fructose 1,6-bisphosphate + H2O = beta-D-fructose 6-phosphate + phosphate. Its pathway is carbohydrate biosynthesis; gluconeogenesis. The sequence is that of Fructose-1,6-bisphosphatase class 1 2 from Cupriavidus metallidurans (strain ATCC 43123 / DSM 2839 / NBRC 102507 / CH34) (Ralstonia metallidurans).